The following is a 277-amino-acid chain: Putative thiosulfate sulfurtransferase (277 aa).

Rhodanese domains follow at residues 18–125 and 154–274; these read HAPK…PLSS and AINV…APIE. Cys-233 functions as the Cysteine persulfide intermediate in the catalytic mechanism. Arg-238 is a binding site for substrate.

It carries out the reaction thiosulfate + hydrogen cyanide = thiocyanate + sulfite + 2 H(+). May be a sulfotransferase involved in the formation of thiosulfate. This chain is Putative thiosulfate sulfurtransferase (cysA1), found in Mycobacterium tuberculosis (strain CDC 1551 / Oshkosh).